The chain runs to 360 residues: MTKRLLILEDGTIFEGEPFGADIDVTGEIVFNTGMTGYQESITDQSYNGQILTFTYPLIGNYGINRDDYESISPTCKGVVVSEVSRLASNWRKQMTLDAFLKIKGIPGISGIDTRALTKIIRQHGTMKATMADDGDSIQHLKDQLRATVLPTNTIEQVSTKTAYPAPGIGKNIVLVDFGLKHSILREFSKRQCNITVVPFNITAEEVLQLNPDGLMLSNGPGNPEDLPEALDMIRGVQGKIPIFGICMGHQLFSLANGAKTCKMTFGHRGFNHAVREIATGRIDFTSQNHGYAVERSSLPDTLMVTHEDINDKTVEGVKHRDFPAFSVQFHPDAAPGPHDASYLFDEFLEMIDSWRCTSK.

The segment at 1–169 (MTKRLLILED…TKTAYPAPGI (169 aa)) is CPSase. Ser46, Gly220, and Gly222 together coordinate L-glutamine. The 187-residue stretch at 172–358 (NIVLVDFGLK…LEMIDSWRCT (187 aa)) folds into the Glutamine amidotransferase type-1 domain. Cys247 serves as the catalytic Nucleophile. Met248, Gln251, Asn289, Gly291, and Tyr292 together coordinate L-glutamine. Catalysis depends on residues His331 and Asp333.

This sequence belongs to the CarA family. In terms of assembly, composed of two chains; the small (or glutamine) chain promotes the hydrolysis of glutamine to ammonia, which is used by the large (or ammonia) chain to synthesize carbamoyl phosphate. Tetramer of heterodimers (alpha,beta)4.

The catalysed reaction is hydrogencarbonate + L-glutamine + 2 ATP + H2O = carbamoyl phosphate + L-glutamate + 2 ADP + phosphate + 2 H(+). The enzyme catalyses L-glutamine + H2O = L-glutamate + NH4(+). It functions in the pathway amino-acid biosynthesis; L-arginine biosynthesis; carbamoyl phosphate from bicarbonate: step 1/1. Its pathway is pyrimidine metabolism; UMP biosynthesis via de novo pathway; (S)-dihydroorotate from bicarbonate: step 1/3. Functionally, small subunit of the glutamine-dependent carbamoyl phosphate synthetase (CPSase). CPSase catalyzes the formation of carbamoyl phosphate from the ammonia moiety of glutamine, carbonate, and phosphate donated by ATP, constituting the first step of 2 biosynthetic pathways, one leading to arginine and/or urea and the other to pyrimidine nucleotides. The small subunit (glutamine amidotransferase) binds and cleaves glutamine to supply the large subunit with the substrate ammonia. In Streptococcus pyogenes serotype M3 (strain SSI-1), this protein is Carbamoyl phosphate synthase small chain.